The sequence spans 88 residues: Potassium channel toxin MeuTXKbeta3-meucin-24 (88 aa).

The first 22 residues, 1–22 (MMKQQFFLFLAVIVMISSVIEA), serve as a signal peptide directing secretion. In terms of domain architecture, BetaSPN-type CS-alpha/beta spans 55–88 (EYACPVIEKWCEDHCQAKNAIGRCENTECKCLSK). 3 disulfides stabilise this stretch: C58/C78, C65/C83, and C69/C85.

The protein belongs to the long chain scorpion toxin family. Class 2 subfamily. Expressed by the venom gland.

It is found in the secreted. Inhibits voltage-gated potassium channels. Its function is as follows. The synthetic meucin-24 inhibits the development of P.berghei ookinetes, kills intraerythrocytic P.falciparum, and is cytotoxic to the Drosophila S2 cells at micromolar concentrations. No antibacterial, antifungal and hemolytic activities have been found at micromolar concentrations. The chain is Potassium channel toxin MeuTXKbeta3-meucin-24 from Mesobuthus eupeus (Lesser Asian scorpion).